Consider the following 444-residue polypeptide: Acyl-CoA (8-3)-desaturase (444 aa).

The residue at position 1 (methionine 1) is an N-acetylmethionine. Topologically, residues 1–121 are cytoplasmic; sequence MAPDPVAAET…FRELRATVER (121 aa). A Cytochrome b5 heme-binding domain is found at 17–94; sequence PRYFTWDEVA…MNSLLIGELS (78 aa). Residues 122–142 form a helical membrane-spanning segment; that stretch reads MGLMKANHVFFLLYLLHILLL. Topologically, residues 143–145 are lumenal; sequence DGA. A helical transmembrane segment spans residues 146–170; sequence AWLTLWVFGTSFLPFLLCAVLLSAV. Residues 171 to 267 lie on the Cytoplasmic side of the membrane; it reads QAQAGWLQHD…PYNHQHKYFF (97 aa). The Histidine box-1 signature appears at 179 to 183; that stretch reads HDFGH. The Histidine box-2 signature appears at 216–220; that stretch reads HFQHH. The helical transmembrane segment at 268–288 threads the bilayer; that stretch reads LIGPPALLPLYFQWYIFYFVI. At 289–305 the chain is on the lumenal side; sequence QRKKWVDLAWMITFYVR. A helical membrane pass occupies residues 306–326; it reads FFLTYVPLLGLKAFLGLFFIV. The Cytoplasmic segment spans residues 327 to 444; the sequence is RFLESNWFVW…QLWLDAYLHQ (118 aa). Residues 382 to 386 carry the Histidine box-3 motif; it reads QIEHH.

This sequence belongs to the fatty acid desaturase type 1 family. Widely expressed, with highest levels in liver, brain, adrenal gland and heart. Highly expressed in fetal liver and brain.

It localises to the endoplasmic reticulum membrane. Its subcellular location is the mitochondrion. The catalysed reaction is (8Z,11Z,14Z)-eicosatrienoyl-CoA + 2 Fe(II)-[cytochrome b5] + O2 + 2 H(+) = (5Z,8Z,11Z,14Z)-eicosatetraenoyl-CoA + 2 Fe(III)-[cytochrome b5] + 2 H2O. It catalyses the reaction (8Z,11Z,14Z,17Z)-eicosatetraenoyl-CoA + 2 Fe(II)-[cytochrome b5] + O2 + 2 H(+) = (5Z,8Z,11Z,14Z,17Z)-eicosapentaenoyl-CoA + 2 Fe(III)-[cytochrome b5] + 2 H2O. It carries out the reaction (11E)-octadecenoyl-CoA + 2 Fe(II)-[cytochrome b5] + O2 + 2 H(+) = (5Z,11E)-octadecadienoyl-CoA + 2 Fe(III)-[cytochrome b5] + 2 H2O. Its pathway is lipid metabolism; polyunsaturated fatty acid biosynthesis. Functionally, acts as a front-end fatty acyl-coenzyme A (CoA) desaturase that introduces a cis double bond at carbon 5 located between a preexisting double bond and the carboxyl end of the fatty acyl chain. Involved in biosynthesis of highly unsaturated fatty acids (HUFA) from the essential polyunsaturated fatty acids (PUFA) linoleic acid (LA) (18:2n-6) and alpha-linolenic acid (ALA) (18:3n-3) precursors. Specifically, desaturates dihomo-gamma-linoleoate (DGLA) (20:3n-6) and eicosatetraenoate (ETA) (20:4n-3) to generate arachidonate (AA) (20:4n-6) and eicosapentaenoate (EPA) (20:5n-3), respectively. As a rate limiting enzyme for DGLA (20:3n-6) and AA (20:4n-6)-derived eicosanoid biosynthesis, controls the metabolism of inflammatory lipids like prostaglandin E2, critical for efficient acute inflammatory response and maintenance of epithelium homeostasis. Contributes to membrane phospholipid biosynthesis by providing AA (20:4n-6) as a major acyl chain esterified into phospholipids. In particular, regulates phosphatidylinositol-4,5-bisphosphate levels, modulating inflammatory cytokine production in T-cells. Also desaturates (11E)-octadecenoate (trans-vaccenoate)(18:1n-9), a metabolite in the biohydrogenation pathway of LA (18:2n-6). Does not exhibit any catalytic activity toward 20:3n-6, but it may enhance FADS2 activity. This is Acyl-CoA (8-3)-desaturase from Homo sapiens (Human).